The sequence spans 283 residues: Methylamine utilization ferredoxin-type protein MauN (283 aa).

4Fe-4S ferredoxin-type domains are found at residues 217–248 (VRVS…PALK) and 251–280 (GSPL…MASR). Cys227, Cys230, Cys233, Cys237, Cys260, Cys263, Cys266, and Cys270 together coordinate [4Fe-4S] cluster.

Its pathway is one-carbon metabolism; methylamine degradation. In terms of biological role, involved in electron transfer. The protein is Methylamine utilization ferredoxin-type protein MauN (mauN) of Paracoccus denitrificans (strain Pd 1222).